Consider the following 433-residue polypeptide: Elongation factor 1-alpha (433 aa).

A tr-type G domain is found at 5-220 (KPHINVVFIG…ALDMLKPPQL (216 aa)). The segment at 14–21 (GHVDHGKS) is G1. 14–21 (GHVDHGKS) serves as a coordination point for GTP. S21 provides a ligand contact to Mg(2+). Residues 70–74 (GVTID) are G2. Residues 91–94 (DAPG) are G3. GTP-binding positions include 91-95 (DAPGH) and 146-149 (NKMD). The segment at 146 to 149 (NKMD) is G4. The interval 186-188 (ASF) is G5.

It belongs to the TRAFAC class translation factor GTPase superfamily. Classic translation factor GTPase family. EF-Tu/EF-1A subfamily.

The protein localises to the cytoplasm. The enzyme catalyses GTP + H2O = GDP + phosphate + H(+). GTP hydrolase that promotes the GTP-dependent binding of aminoacyl-tRNA to the A-site of ribosomes during protein biosynthesis. The sequence is that of Elongation factor 1-alpha from Nanoarchaeum equitans (strain Kin4-M).